The primary structure comprises 394 residues: Elongation factor Tu (394 aa).

The region spanning 10–204 is the tr-type G domain; sequence KTHLNVGTIG…TLDTYIEDPV (195 aa). Residues 19–26 form a G1 region; the sequence is GHVDHGKT. Residue 19-26 participates in GTP binding; it reads GHVDHGKT. T26 is a binding site for Mg(2+). The tract at residues 60 to 64 is G2; sequence GITIK. The interval 81–84 is G3; sequence DCPG. GTP contacts are provided by residues 81–85 and 136–139; these read DCPGH and NKCD. A G4 region spans residues 136–139; that stretch reads NKCD. The segment at 174-176 is G5; that stretch reads SAL.

Belongs to the TRAFAC class translation factor GTPase superfamily. Classic translation factor GTPase family. EF-Tu/EF-1A subfamily. As to quaternary structure, monomer.

The protein resides in the cytoplasm. The catalysed reaction is GTP + H2O = GDP + phosphate + H(+). Its function is as follows. GTP hydrolase that promotes the GTP-dependent binding of aminoacyl-tRNA to the A-site of ribosomes during protein biosynthesis. The sequence is that of Elongation factor Tu from Aster yellows witches'-broom phytoplasma (strain AYWB).